The sequence spans 476 residues: Aspartyl/glutamyl-tRNA(Asn/Gln) amidotransferase subunit B (476 aa).

The protein belongs to the GatB/GatE family. GatB subfamily. In terms of assembly, heterotrimer of A, B and C subunits.

It carries out the reaction L-glutamyl-tRNA(Gln) + L-glutamine + ATP + H2O = L-glutaminyl-tRNA(Gln) + L-glutamate + ADP + phosphate + H(+). It catalyses the reaction L-aspartyl-tRNA(Asn) + L-glutamine + ATP + H2O = L-asparaginyl-tRNA(Asn) + L-glutamate + ADP + phosphate + 2 H(+). Functionally, allows the formation of correctly charged Asn-tRNA(Asn) or Gln-tRNA(Gln) through the transamidation of misacylated Asp-tRNA(Asn) or Glu-tRNA(Gln) in organisms which lack either or both of asparaginyl-tRNA or glutaminyl-tRNA synthetases. The reaction takes place in the presence of glutamine and ATP through an activated phospho-Asp-tRNA(Asn) or phospho-Glu-tRNA(Gln). This chain is Aspartyl/glutamyl-tRNA(Asn/Gln) amidotransferase subunit B, found in Lacticaseibacillus casei (strain BL23) (Lactobacillus casei).